The sequence spans 379 residues: Cytochrome b (379 aa).

Transmembrane regions (helical) follow at residues 32 to 52 (YGSL…VLAT), 76 to 98 (WLLR…LHIG), 111 to 131 (VWNI…LGYV), and 177 to 197 (FFAL…LHIF). Histidine 82 and histidine 96 together coordinate heme b. The heme b site is built by histidine 181 and histidine 195. Histidine 200 provides a ligand contact to a ubiquinone. The next 4 helical transmembrane spans lie at 223-243 (YSVK…VFTL), 287-304 (LGGV…FLFS), 320-340 (LARL…WLGS), and 348-367 (NEVA…TMCA).

This sequence belongs to the cytochrome b family. As to quaternary structure, the main subunits of complex b-c1 are: cytochrome b, cytochrome c1 and the Rieske protein. Requires heme b as cofactor.

The protein localises to the mitochondrion inner membrane. In terms of biological role, component of the ubiquinol-cytochrome c reductase complex (complex III or cytochrome b-c1 complex) that is part of the mitochondrial respiratory chain. The b-c1 complex mediates electron transfer from ubiquinol to cytochrome c. Contributes to the generation of a proton gradient across the mitochondrial membrane that is then used for ATP synthesis. This is Cytochrome b (mt:Cyt-b) from Brachionus plicatilis (Marine rotifer).